We begin with the raw amino-acid sequence, 38 residues long: Large ribosomal subunit protein bL36 (38 aa).

It belongs to the bacterial ribosomal protein bL36 family.

The sequence is that of Large ribosomal subunit protein bL36 from Enterococcus faecalis (strain ATCC 700802 / V583).